Here is a 127-residue protein sequence, read N- to C-terminus: Large ribosomal subunit protein bL12 (127 aa).

This sequence belongs to the bacterial ribosomal protein bL12 family. Homodimer. Part of the ribosomal stalk of the 50S ribosomal subunit. Forms a multimeric L10(L12)X complex, where L10 forms an elongated spine to which 2 to 4 L12 dimers bind in a sequential fashion. Binds GTP-bound translation factors.

Forms part of the ribosomal stalk which helps the ribosome interact with GTP-bound translation factors. Is thus essential for accurate translation. This Syntrophobacter fumaroxidans (strain DSM 10017 / MPOB) protein is Large ribosomal subunit protein bL12.